The chain runs to 125 residues: Cyclic diguanosine monophosphate-binding protein PA4608 (125 aa).

3',3'-c-di-GMP is bound at residue 6–13; it reads DERRRFHR. The PilZ domain maps to 7 to 103; that stretch reads ERRRFHRIAF…SISHLRRLVE (97 aa). Positions 9 to 13 match the RXXXR motif; surrounds the surface of the c-di-GMP binding site motif; sequence RRFHR. The short motif at 35–40 is the DXSXXG motif; surrounds the surface of the c-di-GMP binding site element; it reads DVSLHG. Tryptophan 77 contributes to the 3',3'-c-di-GMP binding site.

Monomer in both c-di-GMP-bound and free forms.

Binds the second messenger bis-(3'-5') cyclic dimeric guanosine monophosphate (c-di-GMP). Can bind two c-di-GMP molecules per monomer. May play a role in bacterial second-messenger regulated processes. Binding to c-di-GMP induces a conformational change of the C- and N-termini resulting in the exposure of a highly negative surface on one side of the protein to a possible effector protein. The chain is Cyclic diguanosine monophosphate-binding protein PA4608 from Pseudomonas aeruginosa (strain ATCC 15692 / DSM 22644 / CIP 104116 / JCM 14847 / LMG 12228 / 1C / PRS 101 / PAO1).